The sequence spans 213 residues: MRRGSGDAAVADAIERSKTTAARNIPQLPDLPLPEDTANLRLGPDLNNELLAVLPLVGVWRGEGEGHDPDTGDYPFGQQIIVSHNGGNYLKWESQTWVLDADGEYVRPDLHETGFWRISGDGIPGSTNEEVVELLLAHSSGIVELFYGQALTQSSWELATDVVIRSTSGVLVGGAKRLYGIVEGGDLAYVEERIIADGELRPHLSARLSRYVG.

Positions 58-64 (GVWRGEG) match the GXWXGXG motif. Lys176 and His203 together coordinate heme b.

Belongs to the nitrobindin family. Homodimer. Heme b is required as a cofactor.

The enzyme catalyses peroxynitrite = nitrate. It functions in the pathway nitrogen metabolism. Functionally, heme-binding protein able to scavenge peroxynitrite and to protect free L-tyrosine against peroxynitrite-mediated nitration, by acting as a peroxynitrite isomerase that converts peroxynitrite to nitrate. Therefore, this protein likely plays a role in peroxynitrite sensing and in the detoxification of reactive nitrogen and oxygen species (RNS and ROS, respectively). Is able to bind nitric oxide (NO) in vitro, but may act as a sensor of peroxynitrite levels in vivo. The sequence is that of Peroxynitrite isomerase 2 from Rhodococcus jostii (strain RHA1).